The primary structure comprises 638 residues: DEAD-box ATP-dependent RNA helicase 52B (638 aa).

Low complexity-rich tracts occupy residues 1-21 and 40-67; these read MRSSWADSAANAEESAPAAAA and GQAAPAAPAQAGALPSAAAAAQPSVGQP. A disordered region spans residues 1–129; it reads MRSSWADSAA…WDRRDREPDP (129 aa). Residues 79–112 show a composition bias toward gly residues; that stretch reads VNGGGGGGGGSVGGSRQGFGAGGRGGGGGGGGGA. A compositionally biased stretch (basic and acidic residues) spans 119–128; the sequence is GWDRRDREPD. Residues 169–197 carry the Q motif motif; sequence NTFAEIDLGDALNENIRRCKYVKPTPVQR. The region spanning 200–384 is the Helicase ATP-binding domain; sequence IPISIAGRDL…SDFLADYIFL (185 aa). An ATP-binding site is contributed by 213-220; sequence AQTGSGKT. A DEAD box motif is present at residues 328 to 331; it reads DEAD. One can recognise a Helicase C-terminal domain in the interval 411-562; it reads YLMDLLHAQR…EVPQWLERYA (152 aa). Residues 565–638 form a disordered region; that stretch reads SSFGGGGGRN…GGQGFSSAWD (74 aa). Gly residues predominate over residues 567–583; it reads FGGGGGRNRRSGGGARF. Residues 584-593 show a composition bias toward basic and acidic residues; that stretch reads GGRDFRRDRG. Residues 594-632 are compositionally biased toward gly residues; it reads SGGGGYGGGGGGYGGGGYGGGGGGGGYGGGSSYGGGGQG.

Belongs to the DEAD box helicase family. DDX3/DED1 subfamily.

It carries out the reaction ATP + H2O = ADP + phosphate + H(+). The protein is DEAD-box ATP-dependent RNA helicase 52B (PL10B) of Oryza sativa subsp. japonica (Rice).